Consider the following 1007-residue polypeptide: Inversin-A (1007 aa).

ANK repeat units lie at residues 9 to 39 (SLAS…VIDQ), 43 to 72 (LGRT…QVNH), 76 to 105 (SGRT…DCTH), 109 to 140 (RDIT…QVDA), 144 to 173 (RKQT…NIGI), 177 to 209 (EGKI…TESL), 216 to 246 (EGRT…NVAP), 250 to 279 (LFRT…SPNI), 284 to 313 (QGAT…VRDE), 317 to 346 (EGRT…ELEV), 352 to 381 (YGGT…QVDA), 385 to 414 (MKHT…KVHL), 418 to 447 (DGRS…NPDA), 451 to 480 (EGRT…DPNI), 484 to 513 (NGRT…FPNQ), and 519 to 549 (ERYT…SIAA). Positions 486-494 (RTALHWSCN) match the D-box 1 motif. The region spanning 551–580 (QDIAASKIQAVYKGHKVRRAFQERKNLLMK) is the IQ 1 domain. Basic and acidic residues-rich tracts occupy residues 585–599 (RKGA…ENRQ) and 608–652 (GKQK…HQEE). 2 disordered regions span residues 585 to 837 (RKGA…KEFS) and 868 to 893 (SAKS…SALK). Polar residues predominate over residues 684–701 (IQSSPIEHVHTNSIQTRM). Over residues 702–712 (SPSRTSISHSS) the composition is skewed to low complexity. A compositionally biased stretch (polar residues) spans 727–745 (NPTQNNTQPRRTSRPQIES). A compositionally biased stretch (basic and acidic residues) spans 751–771 (HRIEDLVQKESRRKSHREERK). Residues 772–784 (GSHRQRASSHHRL) show a composition bias toward basic residues. Residues 870–893 (KSGQRPLTETQSPEKACQGSSALK) show a composition bias toward polar residues. The D-box 2 signature appears at 964–972 (RKQLFQRKK). In terms of domain architecture, IQ 2 spans 971 to 1000 (KKHAATVIQKAWRTYCIRKSSRKTRHSHLR).

As to quaternary structure, interacts with apc2. Binds calmodulin.

The protein localises to the cytoplasm. It localises to the cytoskeleton. In terms of biological role, required for normal renal development and establishment of left-right axis. Probably acts as a molecular switch between different Wnt signaling pathways. Inhibits the canonical Wnt pathway by targeting cytoplasmic disheveled for degradation by the ubiquitin-proteasome. This suggests that it is required in renal development to oppose the repression of terminal differentiation of tubular epithelial cells by Wnt signaling. Plays a central role in convergent extension movements in gastrulating embryos, a processus regulated by Wnt signaling. This is Inversin-A (invs-a) from Xenopus laevis (African clawed frog).